The chain runs to 449 residues: PC-esterase domain-containing protein 1A (449 aa).

Belongs to the PC-esterase family.

This chain is PC-esterase domain-containing protein 1A (Pced1a), found in Mus musculus (Mouse).